A 300-amino-acid polypeptide reads, in one-letter code: Tubulin polyglutamylase complex subunit 2 (300 aa).

The interval Lys257–Lys300 is disordered. The span at Pro276–Lys300 shows a compositional bias: low complexity.

As to quaternary structure, part of the neuronal tubulin polyglutamylase complex which contains TPGS1, TPGS2, TTLL1, LRRC49 and NICN1. Interacts with CSTPP1 and LRRC49.

It is found in the cytoplasm. It localises to the cytoskeleton. The protein resides in the microtubule organizing center. Its subcellular location is the centrosome. The protein localises to the centriolar satellite. Functionally, subunit of the tubulin polyglutamylase complex (TPGC). The complex mediates cilia and flagella polyglutamylation which is essential for their biogenesis and motility. This Homo sapiens (Human) protein is Tubulin polyglutamylase complex subunit 2 (TPGS2).